A 597-amino-acid chain; its full sequence is uncharacterized protein (597 aa).

The VWFA domain occupies 378–575; the sequence is EVSFVVDNSG…YLPRELLRTL (198 aa).

This is an uncharacterized protein from Treponema pallidum (strain Nichols).